Reading from the N-terminus, the 359-residue chain is Protein mab-21-like 2 (359 aa).

The protein belongs to the mab-21 family.

Its subcellular location is the nucleus. It localises to the cytoplasm. In terms of biological role, required for several aspects of embryonic development including normal development of the eye. This Xenopus tropicalis (Western clawed frog) protein is Protein mab-21-like 2 (mab21l2).